A 472-amino-acid polypeptide reads, in one-letter code: Divalent metal cation transporter MntH (472 aa).

11 consecutive transmembrane segments (helical) span residues 59 to 79 (LLAF…PGNW), 92 to 112 (MLLS…ALAA), 144 to 164 (LAII…LNLL), 167 to 187 (VPII…LLLM), 196 to 216 (AFVI…IVLA), 233 to 253 (VVAD…TVMP), 288 to 308 (LALM…AAVF), 325 to 345 (LLAP…ALLA), 377 to 397 (VLTR…YGEQ), 402 to 422 (LLLL…IPLL), and 439 to 459 (WLMV…VKLL).

It belongs to the NRAMP family.

It is found in the cell inner membrane. Functionally, h(+)-stimulated, divalent metal cation uptake system. The polypeptide is Divalent metal cation transporter MntH (Xylella fastidiosa (strain Temecula1 / ATCC 700964)).